The chain runs to 417 residues: Cytochrome b-c1 complex subunit 2, mitochondrial (417 aa).

Residues 1–22 (MTRGVPRLAVAARHFSTAEAAG) constitute a mitochondrion transit peptide.

This sequence belongs to the peptidase M16 family. UQCRC2/QCR2 subfamily. Component of the ubiquinol-cytochrome c oxidoreductase (cytochrome b-c1 complex, complex III, CIII), a multisubunit enzyme composed of 3 respiratory subunits cytochrome b, cytochrome c1 and Rieske protein, 2 core protein subunits, and additional low-molecular weight protein subunits. The complex exists as an obligatory dimer and forms supercomplexes (SCs) in the inner mitochondrial membrane with cytochrome c oxidase (complex IV, CIV).

The protein localises to the mitochondrion inner membrane. Functionally, component of the ubiquinol-cytochrome c oxidoreductase, a multisubunit transmembrane complex that is part of the mitochondrial electron transport chain which drives oxidative phosphorylation. The respiratory chain contains 3 multisubunit complexes succinate dehydrogenase (complex II, CII), ubiquinol-cytochrome c oxidoreductase (cytochrome b-c1 complex, complex III, CIII) and cytochrome c oxidase (complex IV, CIV), that cooperate to transfer electrons derived from NADH and succinate to molecular oxygen, creating an electrochemical gradient over the inner membrane that drives transmembrane transport and the ATP synthase. The cytochrome b-c1 complex catalyzes electron transfer from ubiquinol to cytochrome c, linking this redox reaction to translocation of protons across the mitochondrial inner membrane, with protons being carried across the membrane as hydrogens on the quinol. In the process called Q cycle, 2 protons are consumed from the matrix, 4 protons are released into the intermembrane space and 2 electrons are passed to cytochrome c. The polypeptide is Cytochrome b-c1 complex subunit 2, mitochondrial (QCR2) (Yarrowia lipolytica (strain CLIB 122 / E 150) (Yeast)).